The primary structure comprises 201 residues: Pyridoxal 5'-phosphate synthase subunit PdxT (201 aa).

Residue 50–52 (GES) participates in L-glutamine binding. C82 functions as the Nucleophile in the catalytic mechanism. Residues R115 and 143–144 (IR) each bind L-glutamine. Active-site charge relay system residues include H179 and E181.

Belongs to the glutaminase PdxT/SNO family. As to quaternary structure, in the presence of PdxS, forms a dodecamer of heterodimers. Only shows activity in the heterodimer.

It catalyses the reaction aldehydo-D-ribose 5-phosphate + D-glyceraldehyde 3-phosphate + L-glutamine = pyridoxal 5'-phosphate + L-glutamate + phosphate + 3 H2O + H(+). The enzyme catalyses L-glutamine + H2O = L-glutamate + NH4(+). It functions in the pathway cofactor biosynthesis; pyridoxal 5'-phosphate biosynthesis. Functionally, catalyzes the hydrolysis of glutamine to glutamate and ammonia as part of the biosynthesis of pyridoxal 5'-phosphate. The resulting ammonia molecule is channeled to the active site of PdxS. The protein is Pyridoxal 5'-phosphate synthase subunit PdxT of Deinococcus geothermalis (strain DSM 11300 / CIP 105573 / AG-3a).